A 957-amino-acid polypeptide reads, in one-letter code: Protein CRT10 (957 aa).

A disordered region spans residues 695-719; that stretch reads NSTEEDDVNSDPENEESGSSLTSFQ. Over residues 697-710 the composition is skewed to acidic residues; it reads TEEDDVNSDPENEE. The residue at position 704 (S704) is a Phosphoserine.

In terms of assembly, component of a cullin-RING ligase (CRL) composed of 4 subunits: the RING protein HRT1, the cullin RTT101, a linker protein MMS1, and the substrate receptor CRT10. Interacts with MMS1.

Its function is as follows. Substrate targeting component of a cullin-RING-based E3 ubiquitin-protein ligase complex RTT101(MMS1-CRT10). RTT101(MMS1-CRT10) may regulate nucleotide synthesis through transcriptional regulation of RNR genes encoding ribonucleotide reductases. This chain is Protein CRT10 (CRT10), found in Saccharomyces cerevisiae (strain ATCC 204508 / S288c) (Baker's yeast).